Reading from the N-terminus, the 664-residue chain is Sodium/glucose cotransporter 1 (664 aa).

Residues 1 to 24 are Extracellular-facing; it reads MDSSTWSPPATATAEPLQAYERIR. A helical membrane pass occupies residues 25-47; the sequence is NAADISVIVIYFVVVMAVGLWAM. Topologically, residues 48-66 are cytoplasmic; the sequence is FSTNRGTVGGFFLAGRSMV. The chain crosses the membrane as a helical span at residues 67-90; sequence WWPIGASLFASNIGSGHFVGLAGT. Residues 91–95 lie on the Extracellular side of the membrane; the sequence is GAAAG. The helical transmembrane segment at 96–117 threads the bilayer; sequence IATGGFEWNALILVVLLGWVFV. At 118 to 139 the chain is on the cytoplasmic side; the sequence is PIYIKAGVVTMPEYLRKRFGGQ. A helical transmembrane segment spans residues 140-169; that stretch reads RIQVYLSVLSLVLYIFTKISADIFSGAIFI. The Extracellular portion of the chain corresponds to 170–176; sequence NLALGLD. A helical transmembrane segment spans residues 177 to 193; it reads LYLAIFILLAITALYTI. Over 194-202 the chain is Cytoplasmic; it reads TGGLAAVIY. A helical transmembrane segment spans residues 203–221; it reads TDTLQTVIMLLGSFILTGF. The Extracellular segment spans residues 222–275; the sequence is AFHEVGGYSAFVTKYMNAIPTVTSYGNTTVKKECYTPRADSFHIFRDPLKGDLP. N-linked (GlcNAc...) asparagine glycosylation is present at Asn248. Disulfide bonds link Cys255–Cys511, Cys255–Cys610, Cys345–Cys351, Cys355–Cys361, and Cys517–Cys522. A helical transmembrane segment spans residues 276–295; it reads WPGLIFGLTIISLWYWCTDQ. Topologically, residues 296-309 are cytoplasmic; the sequence is VIVQRCLSAKNMSH. A helical membrane pass occupies residues 310–331; it reads VKAGCIMCGYMKLLPMFLMVMP. Over 332–375 the chain is Extracellular; sequence GMISRILFTEKVACTVPSECEKYCGTKVGCTNIAYPTLVVELMP. A helical transmembrane segment spans residues 376–406; sequence NGLRGLMLSVMLASLMSSLTSIFNSASTLFT. The Cytoplasmic portion of the chain corresponds to 407-422; the sequence is MDIYTKIRKKASEKEL. Residues 423 to 444 form a helical membrane-spanning segment; sequence MIAGRLFMLVLIGVSIAWVPIV. At 445–451 the chain is on the extracellular side; that stretch reads QSAQSGQ. A helical membrane pass occupies residues 452-477; it reads LFDYIQSITSYLGPPIAAVFLLAIFC. Gln457 contributes to the D-glucose binding site. Over 478–481 the chain is Cytoplasmic; that stretch reads KRVN. A helical membrane pass occupies residues 482 to 504; the sequence is EPGAFWGLIIGFLIGVSRMITEF. The Extracellular portion of the chain corresponds to 505 to 525; that stretch reads AYGTGSCMEPSNCPTIICGVH. The helical transmembrane segment at 526-547 threads the bilayer; sequence YLYFAIILFVITIIVILAISLF. The Cytoplasmic portion of the chain corresponds to 548–644; that stretch reads TKPIADVHLY…TSEKRLWRMV (97 aa). Residues 645 to 662 traverse the membrane as a helical segment; sequence VNINGIILLAVAVFCHAY. At 663–664 the chain is on the extracellular side; that stretch reads FA.

The protein belongs to the sodium:solute symporter (SSF) (TC 2.A.21) family. Post-translationally, N-glycosylation is not necessary for the cotransporter function.

It is found in the apical cell membrane. It catalyses the reaction D-glucose(out) + 2 Na(+)(out) = D-glucose(in) + 2 Na(+)(in). The catalysed reaction is D-galactose(out) + 2 Na(+)(out) = D-galactose(in) + 2 Na(+)(in). With respect to regulation, enhanced by the interaction with PDZK1IP1/MAP17; but unlike SLC5A2/SGLT2, PDZK1IP1 is not essential for SLC5A1 transporter activity. Possibly modulated by cholesterol binding. Electrogenic Na(+)-coupled sugar symporter that actively transports D-glucose or D-galactose at the plasma membrane, with a Na(+) to sugar coupling ratio of 2:1. Transporter activity is driven by a transmembrane Na(+) electrochemical gradient set by the Na(+)/K(+) pump. Has a primary role in the transport of dietary monosaccharides from enterocytes to blood. Responsible for the absorption of D-glucose or D-galactose across the apical brush-border membrane of enterocytes, whereas basolateral exit is provided by GLUT2. Additionally, functions as a D-glucose sensor in enteroendocrine cells, triggering the secretion of the incretins GCG and GIP that control food intake and energy homeostasis. Together with SGLT2, functions in reabsorption of D-glucose from glomerular filtrate, playing a nonredundant role in the S3 segment of the proximal tubules. Transports D-glucose into endometrial epithelial cells, controlling glycogen synthesis and nutritional support for the embryo as well as the decidual transformation of endometrium prior to conception. Acts as a water channel enabling passive water transport in response to the osmotic gradient created upon sugar and Na(+) uptake. Has high water conductivity comparable to aquaporins and therefore is expected to play an important role in transepithelial water permeability, especially in the small intestine. The polypeptide is Sodium/glucose cotransporter 1 (SLC5A1) (Ovis aries (Sheep)).